Here is a 343-residue protein sequence, read N- to C-terminus: tRNA N6-adenosine threonylcarbamoyltransferase (343 aa).

The Fe cation site is built by H116 and H120. Residues 138-142 (LVSGG), D171, G184, D188, and N277 each bind substrate. Residue D306 coordinates Fe cation.

Belongs to the KAE1 / TsaD family. Fe(2+) is required as a cofactor.

It localises to the cytoplasm. It carries out the reaction L-threonylcarbamoyladenylate + adenosine(37) in tRNA = N(6)-L-threonylcarbamoyladenosine(37) in tRNA + AMP + H(+). Functionally, required for the formation of a threonylcarbamoyl group on adenosine at position 37 (t(6)A37) in tRNAs that read codons beginning with adenine. Is involved in the transfer of the threonylcarbamoyl moiety of threonylcarbamoyl-AMP (TC-AMP) to the N6 group of A37, together with TsaE and TsaB. TsaD likely plays a direct catalytic role in this reaction. This chain is tRNA N6-adenosine threonylcarbamoyltransferase, found in Ligilactobacillus salivarius (strain UCC118) (Lactobacillus salivarius).